A 602-amino-acid chain; its full sequence is PEX5-related protein (602 aa).

2 disordered regions span residues 94–140 and 167–206; these read VSQT…PETS and HLMA…LNSE. Phosphoserine occurs at positions 181, 229, 233, and 237. TPR repeat units lie at residues 302–335, 336–369, and 371–403; these read WPGA…DPGN, AEAW…QPNN, and KALM…NPKY. Residues S421 and S423 each carry the phosphoserine modification. 3 TPR repeats span residues 450–483, 485–517, and 519–551; these read PDLQ…RPED, SLWN…QPGF, and RSRY…QRKS.

This sequence belongs to the peroxisomal targeting signal receptor family. As to quaternary structure, forms an obligate 4:4 complex with HCN2. Interacts with RAB8B. Interacts with HCN3. Interacts with HCN4 with a 4:4 HCN4:PEX5L stoichiometry; reduces the effects of cAMP on the voltage-dependence and rate of activation of HCN4. As to expression, brain specific.

It is found in the cytoplasm. The protein localises to the membrane. Functionally, accessory subunit of hyperpolarization-activated cyclic nucleotide-gated (HCN) channels, regulating their cell-surface expression and cyclic nucleotide dependence. The chain is PEX5-related protein (Pex5l) from Rattus norvegicus (Rat).